The chain runs to 301 residues: MKHLLSVCDMDNVVDLLDLADDYKEGKIREKILRGKTLAMIFEKSSTRTRVSFEVGAFQMGAQPLYLSASDLQLGRGEPIADTARTLSRYVDGIMIRAISHSDVVELAGEASVPVINGLTDLEHPCQALADMQTIREKLGGFDGRLVFVGDGNNVCHSLLLITATLGMDMDVACPPGYEPDPGIREMAGKIADETGSRIRVIHDPSEAVRGADVVYTDVWVSMGYEDEAEDRLEVFRPYQVNMELMELAAPEAIFMHCLPAVRGQETTAEVIDGPHSVVWDQAENRLHAQKAIMHWLMGDI.

Carbamoyl phosphate is bound by residues 46 to 49 (STRT), glutamine 73, arginine 97, and 124 to 127 (HPCQ). Residues asparagine 154, aspartate 218, and 222–223 (SM) each bind L-ornithine. Residues 258–259 (CL) and arginine 286 each bind carbamoyl phosphate.

Belongs to the aspartate/ornithine carbamoyltransferase superfamily. OTCase family.

The protein localises to the cytoplasm. The enzyme catalyses carbamoyl phosphate + L-ornithine = L-citrulline + phosphate + H(+). It functions in the pathway amino-acid biosynthesis; L-arginine biosynthesis; L-arginine from L-ornithine and carbamoyl phosphate: step 1/3. Reversibly catalyzes the transfer of the carbamoyl group from carbamoyl phosphate (CP) to the N(epsilon) atom of ornithine (ORN) to produce L-citrulline. The chain is Ornithine carbamoyltransferase (argF) from Methanothermobacter thermautotrophicus (strain ATCC 29096 / DSM 1053 / JCM 10044 / NBRC 100330 / Delta H) (Methanobacterium thermoautotrophicum).